A 1876-amino-acid polypeptide reads, in one-letter code: Phenolphthiocerol/phthiocerol polyketide synthase subunit A (1876 aa).

Thr-2 is subject to N-acetylthreonine. The Carrier 1 domain maps to 9 to 83 (ADLRHWLIDY…ALAAYLAAPE (75 aa)). The residue at position 43 (Ser-43) is an O-(pantetheine 4'-phosphoryl)serine. In terms of domain architecture, Ketosynthase family 3 (KS3) spans 101–526 (DEPIAVVGMG…GTNAHVVIEQ (426 aa)). Active-site for beta-ketoacyl synthase activity residues include Cys-273, His-408, and His-448. Residues 626 to 950 (SPGPGTVFVY…NLNKAHTIHP (325 aa)) form an acyltransferase region. Ser-720 serves as the catalytic For malonyltransferase activity. Residues 997-1112 (HTTVATVSAS…AQLSSSPSDS (116 aa)) form an N-terminal hotdog fold region. Positions 997-1267 (HTTVATVSAS…YRALDFGLDV (271 aa)) constitute a PKS/mFAS DH domain. His-1027 serves as the catalytic Proton acceptor; for dehydratase activity. The interval 1102-1130 (TAQLSSSPSDSASSLNEHHRANGQPPERA) is disordered. Residues 1106–1115 (SSSPSDSASS) are compositionally biased toward low complexity. The tract at residues 1130–1267 (AHRDLIPDLA…YRALDFGLDV (138 aa)) is C-terminal hotdog fold. Asp-1186 serves as the catalytic Proton donor; for dehydratase activity. 1491–1551 (AAYLITGGLG…RRRIDAIRAL (61 aa)) is a binding site for NADP(+). The interval 1491–1728 (AAYLITGGLG…DGYDVAQAVV (238 aa)) is beta-ketoacyl reductase. One can recognise a Carrier 2 domain in the interval 1759 to 1836 (EVRSELEQGL…SLASYLAKRV (78 aa)). O-(pantetheine 4'-phosphoryl)serine is present on Ser-1796.

Requires NADP(+) as cofactor. Pantetheine 4'-phosphate serves as cofactor.

The enzyme catalyses icosanoyl-[(phenol)carboxyphthiodiolenone synthase] + 2 (S)-methylmalonyl-CoA + 3 malonyl-CoA + 5 NADPH + 10 H(+) = C32-carboxyphthiodiolenone-[(phenol)carboxyphthiodiolenone synthase] + 5 CO2 + 5 NADP(+) + 5 CoA + 2 H2O. It catalyses the reaction docosanoyl-[(phenol)carboxyphthiodiolenone synthase] + 2 (S)-methylmalonyl-CoA + 3 malonyl-CoA + 5 NADPH + 10 H(+) = C34-carboxyphthiodiolenone-[(phenol)carboxyphthiodiolenone synthase] + 5 CO2 + 5 NADP(+) + 5 CoA + 2 H2O. The catalysed reaction is 17-(4-hydroxyphenyl)heptadecanoyl-[(phenol)carboxyphthiodiolenone synthase] + 2 (S)-methylmalonyl-CoA + 3 malonyl-CoA + 5 NADPH + 10 H(+) = C35-(phenol)carboxyphthiodiolenone-[(phenol)carboxyphthiodiolenone synthase] + 5 CO2 + 5 NADP(+) + 5 CoA + 2 H2O. It carries out the reaction 19-(4-hydroxyphenyl)nonadecanoyl-[(phenol)carboxyphthiodiolenone synthase] + 2 (S)-methylmalonyl-CoA + 3 malonyl-CoA + 5 NADPH + 10 H(+) = C37-(phenol)carboxyphthiodiolenone-[(phenol)carboxyphthiodiolenone synthase] + 5 CO2 + 5 NADP(+) + 5 CoA + 2 H2O. The protein operates within lipid metabolism; fatty acid biosynthesis. Part of the PpsABCDE complex involved in the biosynthesis of the lipid core common to phthiocerols and phenolphthiocerols by successive additions of malonyl-CoA or methylmalonyl-CoA extender units. PpsA can accept as substrate the activated forms of either icosanoyl (C20), docosanoyl (C22) or lignoceroyl (C24) groups from FadD26, or a (4-hydroxyphenyl)-C17 or (4-hydroxyphenyl)-C19 fatty acyl from FadD29. PpsA initiates the biosynthesis and extends its substrate using a malonyl-CoA extender unit. The PpsB and PpsC proteins add the second and third malonyl-CoA extender units. PpsD adds an (R)-methylmalonyl unit and PpsE adds a second (R)-methylmalonyl unit. The incorporation of the methylmalonyl units results in formation of two branched methyl groups in the elongated product. The chain is Phenolphthiocerol/phthiocerol polyketide synthase subunit A (ppsA) from Mycobacterium tuberculosis (strain ATCC 25618 / H37Rv).